A 199-amino-acid polypeptide reads, in one-letter code: Protein OPI10 homolog (199 aa).

It belongs to the OPI10 family.

The chain is Protein OPI10 homolog from Aedes aegypti (Yellowfever mosquito).